The sequence spans 465 residues: Hexokinase-4 (465 aa).

Residues 10–454 enclose the Hexokinase domain; the sequence is ATKKEKVEQI…SGRGAALVSA (445 aa). The interval 67–203 is hexokinase small subdomain; it reads EGSEVGDFLS…DFEMDVVAMV (137 aa). 78–83 contributes to the ATP binding site; it reads DLGGTN. Substrate-binding positions include 151–152, 168–169, and 204–205; these read SF, TK, and ND. The segment at 204–443 is hexokinase large subdomain; that stretch reads NDTVATMISC…CEITFIESEE (240 aa). Thr228 is a binding site for ATP. Residues Asn231, Glu256, and Glu290 each coordinate substrate. Residues 295-296, 332-336, and 411-415 contribute to the ATP site; these read GK, TRFVS, and SVYKL.

The protein belongs to the hexokinase family. In terms of assembly, monomer. Interacts with MIDN; the interaction occurs preferentially at low glucose levels and results in inhibition of hexokinase activity. Interacts with GCKR; leading to sequestration in the nucleus. In terms of tissue distribution, expression is restricted to the liver and pancreatic islets (at protein level).

It is found in the cytoplasm. Its subcellular location is the nucleus. It localises to the mitochondrion. It catalyses the reaction a D-hexose + ATP = a D-hexose 6-phosphate + ADP + H(+). It carries out the reaction D-fructose + ATP = D-fructose 6-phosphate + ADP + H(+). The catalysed reaction is D-glucose + ATP = D-glucose 6-phosphate + ADP + H(+). The enzyme catalyses D-mannose + ATP = D-mannose 6-phosphate + ADP + H(+). It participates in carbohydrate metabolism; hexose metabolism. The protein operates within carbohydrate degradation; glycolysis; D-glyceraldehyde 3-phosphate and glycerone phosphate from D-glucose: step 1/4. Its activity is regulated as follows. Subject to allosteric regulation. Low glucose and high fructose-6-phosphate triggers association with the inhibitor GCKR followed by sequestration in the nucleus. In terms of biological role, catalyzes the phosphorylation of hexose, such as D-glucose, D-fructose and D-mannose, to hexose 6-phosphate (D-glucose 6-phosphate, D-fructose 6-phosphate and D-mannose 6-phosphate, respectively). Compared to other hexokinases, has a weak affinity for D-glucose, and is effective only when glucose is abundant. Mainly expressed in pancreatic beta cells and the liver and constitutes a rate-limiting step in glucose metabolism in these tissues. Since insulin secretion parallels glucose metabolism and the low glucose affinity of GCK ensures that it can change its enzymatic activity within the physiological range of glucose concentrations, GCK acts as a glucose sensor in the pancreatic beta cell. In pancreas, plays an important role in modulating insulin secretion. In liver, helps to facilitate the uptake and conversion of glucose by acting as an insulin-sensitive determinant of hepatic glucose usage. Required to provide D-glucose 6-phosphate for the synthesis of glycogen. Mediates the initial step of glycolysis by catalyzing phosphorylation of D-glucose to D-glucose 6-phosphate. The protein is Hexokinase-4 of Rattus norvegicus (Rat).